The chain runs to 497 residues: Casein kinase I isoform delta (497 aa).

Disordered stretches follow at residues 1–58 (MATM…EEMN) and 86–109 (PIQQ…HPTQ). Over residues 14-34 (WHNNTSTPMDTTEPATNSHNP) the composition is skewed to polar residues. Residues 88 to 105 (QQHQQPPLLQQAQPSQIP) show a composition bias toward low complexity. The Protein kinase domain maps to 191 to 458 (FRLGRKIGSG…YLRNLFRTLF (268 aa)). Residues 197–205 (IGSGSFGDI) and K220 contribute to the ATP site. The active-site Proton acceptor is the D310.

Belongs to the protein kinase superfamily. CK1 Ser/Thr protein kinase family. Casein kinase I subfamily. In terms of assembly, monomer. In terms of tissue distribution, expressed throughout larval development and into the adult stage in both hypodermal seam cells and the hermaphrodite specific neuron.

The protein resides in the cytoplasm. It localises to the nucleus. The protein localises to the chromosome. Its subcellular location is the centromere. It is found in the cell junction. The protein resides in the adherens junction. It catalyses the reaction L-seryl-[protein] + ATP = O-phospho-L-seryl-[protein] + ADP + H(+). The enzyme catalyses L-threonyl-[protein] + ATP = O-phospho-L-threonyl-[protein] + ADP + H(+). Exhibits substrate-dependent heparin activation. Functionally, essential serine/threonine-protein kinase that regulates diverse cellular growth and survival processes including Wnt signaling, DNA repair and circadian rhythms. Casein kinases are operationally defined by their preferential utilization of acidic proteins. Positively regulates the expression of components of the heterochronic pathway, which regulate developmental timing, such as the transcriptional repressor lin-42 and microRNAs such as let-7. Negatively regulates cell cycle exit and cell fusion to prevent the premature differentiation of hypodermal seam cells into adult cells. Plays a role in regulating axon branching and subsequently, the maturation of the nervous system, most likely by preventing the premature termination of transcripts for proteins such as Ankyrin/unc-44, which are required for maintaining the nervous system. May phosphorylate ssup-72 to promote nervous system maturation. The sequence is that of Casein kinase I isoform delta from Caenorhabditis elegans.